A 475-amino-acid chain; its full sequence is Trifunctional enzyme subunit beta, mitochondrial (475 aa).

The transit peptide at 1–34 (MTTILTSTFRNLSTTSKWALRFSVRPLSCSSQVQ) directs the protein to the mitochondrion. At Lys53 the chain carries N6-succinyllysine. Lys73 carries the N6-acetyllysine; alternate modification. N6-succinyllysine; alternate is present on Lys73. The active-site Acyl-thioester intermediate is the Cys139. The stretch at 174–221 (IRHSRNMRKMMLDLNKAKTLAQRLSLLTKFRLNFLSPELPAVAEFSTN) is an intramembrane region. Position 189 is an N6-acetyllysine; alternate (Lys189). Residue Lys189 is modified to N6-succinyllysine; alternate. N6-succinyllysine is present on residues Lys191, Lys273, and Lys292. Position 294 is an N6-acetyllysine; alternate (Lys294). N6-succinyllysine; alternate is present on Lys294. The residue at position 299 (Lys299) is an N6-acetyllysine. At Lys333 the chain carries N6-acetyllysine; alternate. An N6-succinyllysine; alternate modification is found at Lys333. Residues Lys349 and Lys362 each carry the N6-acetyllysine modification. Cys459 functions as the Proton donor/acceptor in the catalytic mechanism.

Belongs to the thiolase-like superfamily. Thiolase family. As to quaternary structure, heterotetramer of 2 alpha/HADHA and 2 beta/HADHB subunits; forms the mitochondrial trifunctional enzyme. Also purified as higher order heterooligomers including a 4 alpha/HADHA and 4 beta/HADHB heterooligomer which physiological significance remains unclear. The mitochondrial trifunctional enzyme interacts with MTLN. Interacts with RSAD2/viperin.

It localises to the mitochondrion. The protein localises to the mitochondrion inner membrane. Its subcellular location is the mitochondrion outer membrane. The protein resides in the endoplasmic reticulum. The enzyme catalyses an acyl-CoA + acetyl-CoA = a 3-oxoacyl-CoA + CoA. It carries out the reaction butanoyl-CoA + acetyl-CoA = 3-oxohexanoyl-CoA + CoA. The catalysed reaction is hexanoyl-CoA + acetyl-CoA = 3-oxooctanoyl-CoA + CoA. It catalyses the reaction octanoyl-CoA + acetyl-CoA = 3-oxodecanoyl-CoA + CoA. The enzyme catalyses decanoyl-CoA + acetyl-CoA = 3-oxododecanoyl-CoA + CoA. It carries out the reaction dodecanoyl-CoA + acetyl-CoA = 3-oxotetradecanoyl-CoA + CoA. The catalysed reaction is tetradecanoyl-CoA + acetyl-CoA = 3-oxohexadecanoyl-CoA + CoA. The protein operates within lipid metabolism; fatty acid beta-oxidation. Its function is as follows. Mitochondrial trifunctional enzyme catalyzes the last three of the four reactions of the mitochondrial beta-oxidation pathway. The mitochondrial beta-oxidation pathway is the major energy-producing process in tissues and is performed through four consecutive reactions breaking down fatty acids into acetyl-CoA. Among the enzymes involved in this pathway, the trifunctional enzyme exhibits specificity for long-chain fatty acids. Mitochondrial trifunctional enzyme is a heterotetrameric complex composed of two proteins, the trifunctional enzyme subunit alpha/HADHA carries the 2,3-enoyl-CoA hydratase and the 3-hydroxyacyl-CoA dehydrogenase activities, while the trifunctional enzyme subunit beta/HADHB described here bears the 3-ketoacyl-CoA thiolase activity. This Rattus norvegicus (Rat) protein is Trifunctional enzyme subunit beta, mitochondrial (Hadhb).